The primary structure comprises 619 residues: Dihydroxy-acid dehydratase (619 aa).

D81 is a binding site for Mg(2+). C122 contacts [2Fe-2S] cluster. Mg(2+)-binding residues include D123 and K124. The residue at position 124 (K124) is an N6-carboxylysine. Position 195 (C195) interacts with [2Fe-2S] cluster. E491 contributes to the Mg(2+) binding site. S517 serves as the catalytic Proton acceptor.

The protein belongs to the IlvD/Edd family. Homodimer. The cofactor is [2Fe-2S] cluster. It depends on Mg(2+) as a cofactor.

The enzyme catalyses (2R)-2,3-dihydroxy-3-methylbutanoate = 3-methyl-2-oxobutanoate + H2O. The catalysed reaction is (2R,3R)-2,3-dihydroxy-3-methylpentanoate = (S)-3-methyl-2-oxopentanoate + H2O. It functions in the pathway amino-acid biosynthesis; L-isoleucine biosynthesis; L-isoleucine from 2-oxobutanoate: step 3/4. It participates in amino-acid biosynthesis; L-valine biosynthesis; L-valine from pyruvate: step 3/4. In terms of biological role, functions in the biosynthesis of branched-chain amino acids. Catalyzes the dehydration of (2R,3R)-2,3-dihydroxy-3-methylpentanoate (2,3-dihydroxy-3-methylvalerate) into 2-oxo-3-methylpentanoate (2-oxo-3-methylvalerate) and of (2R)-2,3-dihydroxy-3-methylbutanoate (2,3-dihydroxyisovalerate) into 2-oxo-3-methylbutanoate (2-oxoisovalerate), the penultimate precursor to L-isoleucine and L-valine, respectively. This chain is Dihydroxy-acid dehydratase, found in Rhodopseudomonas palustris (strain HaA2).